The following is a 424-amino-acid chain: Tubulin-specific chaperone cofactor E-like protein (424 aa).

A phosphoserine mark is found at S18 and S41. 7 LRR repeats span residues 73–98 (CAHV…IVSN), 99–123 (VPQL…TCAG), 124–147 (SFSG…HMIL), 150–172 (LPDL…PSIC), 173–197 (CHSL…KLGV), 199–224 (FPSL…SLAR), and 226–250 (FPNL…KLNS). One can recognise an LRRCT domain in the interval 262–303 (IPLLQPYTTEERRKLVIARLPSVSKLNGSVVTDGEREDSERF). One can recognise a Ubiquitin-like domain in the interval 334–424 (AEVDLRPQSS…DKIYVESKTK (91 aa)). Residues 349-375 (HFNDQVEEMSIRLDQTVAELKKQLKTL) are a coiled coil.

In terms of tissue distribution, abundantly expressed in testis, but is also present in several tissues at a much lower level.

It localises to the cytoplasm. The protein localises to the cytoskeleton. Its function is as follows. Acts as a regulator of tubulin stability. The polypeptide is Tubulin-specific chaperone cofactor E-like protein (TBCEL) (Homo sapiens (Human)).